The primary structure comprises 1470 residues: Membrane-associated guanylate kinase, WW and PDZ domain-containing protein 3 (1470 aa).

The PDZ 1 domain occupies 18 to 108 (CAVSWAGPPG…PIRLKTVKPG (91 aa)). The interaction with ADRB1 and TGFA stretch occupies residues 18–108 (CAVSWAGPPG…PIRLKTVKPG (91 aa)). One can recognise a Guanylate kinase-like domain in the interval 116 to 290 (RHYLSLQFQK…RSMDFRNYMM (175 aa)). 123 to 130 (FQKGSIDH) contributes to the ATP binding site. The segment at 184-266 (TYDGNFYGTP…ETREMHSESS (83 aa)) is disordered. Pro residues predominate over residues 193 to 204 (PKPPAEPSPFQP). Serine 236 bears the Phosphoserine mark. Residues 238–247 (LPEEEEDEDK) show a composition bias toward acidic residues. WW domains lie at 296–329 (EPLP…DPRL) and 342–375 (GELP…NPVE). Positions 413–495 (RASLKKSTMG…NQYVNLTLCR (83 aa)) constitute a PDZ 2 domain. The tract at residues 413 to 495 (RASLKKSTMG…NQYVNLTLCR (83 aa)) is interaction with PTEN. The disordered stretch occupies residues 550 to 575 (LLSSDRLNGPSDSNEQRASLASSGSS). A compositionally biased stretch (polar residues) spans 559–575 (PSDSNEQRASLASSGSS). Positions 581–657 (TIPLVKGPKG…GADVPLLILR (77 aa)) constitute a PDZ 3 domain. Serine 598 is subject to Phosphoserine. The segment at 665–700 (KTAKMKTDTKETSGSLETINEPTPQPMPFPPSIIRS) is disordered. Residues 676-686 (TSGSLETINEP) are compositionally biased toward polar residues. A Phosphoserine modification is found at serine 702. The PDZ 4 domain maps to 729 to 811 (DVFLRKQESG…NGHVLLTVRR (83 aa)). The tract at residues 729–811 (DVFLRKQESG…NGHVLLTVRR (83 aa)) is interaction with ADGRB1. A disordered region spans residues 818-847 (KQPEDESPQAFSQSGSPRLNRTELPTRSAP). Polar residues predominate over residues 826–847 (QAFSQSGSPRLNRTELPTRSAP). Residues serine 833 and serine 916 each carry the phosphoserine modification. Residues 852-939 (DVILQRKENE…TVTLTVVAEE (88 aa)) form the PDZ 5 domain. The segment at 852–939 (DVILQRKENE…TVTLTVVAEE (88 aa)) is interaction with LPAR2 and GRIN2B. Residues 939–976 (EEHHGPPSGTNSARQSPALQHRPMGQAQATHIPGDRTA) form a disordered region. Over residues 946-956 (SGTNSARQSPA) the composition is skewed to polar residues. The PDZ 6 domain occupies 1022 to 1104 (PVELERGPRG…KVLLLLRPGT (83 aa)). 2 disordered regions span residues 1124-1146 (IYDE…ESHV) and 1167-1470 (DTVQ…DKQL). Polar residues predominate over residues 1175–1191 (TLNGSQPEMKYQSIQKN). 2 stretches are compositionally biased toward basic and acidic residues: residues 1193-1209 (SKKD…KNLL) and 1230-1263 (RHSE…KGEN). Over residues 1285 to 1304 (SSSPRKQQKIGGNSLSNTEG) the composition is skewed to polar residues. Position 1321 is a phosphoserine (serine 1321). Basic and acidic residues-rich tracts occupy residues 1326–1340 (PEGK…KDLK), 1350–1361 (RSPEKRSSKVDE), 1377–1397 (VSEK…DKTG), and 1422–1431 (EVTDRGKERA).

Belongs to the MAGUK family. As to quaternary structure, interacts with ADRB1, ADGRB1, LPAR2/EDG4, FZD4, FZD7, GRIN2B, TGFA and VANGL2. Interacts with PTEN. Interacts with ADRB1, PTPRB and unidentified tyrosine phosphorylated proteins. Interacts with DLL1. Interacts with PRRG4 (via cytoplasmic domain).

The protein localises to the cell membrane. It is found in the cell junction. Its subcellular location is the tight junction. It localises to the nucleus. Its function is as follows. Acts as a scaffolding protein at cell-cell junctions, thereby regulating various cellular and signaling processes. Cooperates with PTEN to modulate the kinase activity of AKT1. Its interaction with PTPRB and tyrosine phosphorylated proteins suggests that it may link receptor tyrosine phosphatase with its substrates at the plasma membrane. In polarized epithelial cells, involved in efficient trafficking of TGFA to the cell surface. Regulates the ability of LPAR2 to activate ERK and RhoA pathways. Regulates the JNK signaling cascade via its interaction with FZD4 and VANGL2. The chain is Membrane-associated guanylate kinase, WW and PDZ domain-containing protein 3 (Magi3) from Rattus norvegicus (Rat).